We begin with the raw amino-acid sequence, 118 residues long: Vesicle-associated membrane protein 1 (118 aa).

The segment at 1 to 36 is disordered; that stretch reads MSAPAQPPAEGTEGTAPGGGPPGPPPNMTSNRRLQQ. The Cytoplasmic portion of the chain corresponds to 1-96; that stretch reads MSAPAQPPAE…KRKYWWKNCK (96 aa). In terms of domain architecture, v-SNARE coiled-coil homology spans 33–93; that stretch reads RLQQTQAQVE…AKLKRKYWWK (61 aa). Ser-63 is modified (phosphoserine). The helical; Anchor for type IV membrane protein transmembrane segment at 97–116 threads the bilayer; that stretch reads MMIMLGAICAIIVVVIVIYF. The Vesicular portion of the chain corresponds to 117–118; that stretch reads FT.

It belongs to the synaptobrevin family. Interacts with VAPA and VAPB. Post-translationally, (Microbial infection) Targeted and hydrolyzed by C.botulinum neurotoxin type B (BoNT/B, botB) which probably hydrolyzes the 78-Gln-|-Phe-79 bond and inhibits neurotransmitter release. (Microbial infection) Targeted and hydrolyzed by C.botulinum neurotoxin type D (BoNT/D, botD) which probably hydrolyzes the 61-Arg-|-Leu-62 bond and inhibits neurotransmitter release. BoNT/D has low catalytic activity on this protein due to its sequence. Note that humans are not known to be infected by C.botulinum type D. In terms of processing, (Microbial infection) Targeted and hydrolyzed by C.botulinum neurotoxin type F (BoNT/F, botF) which probably hydrolyzes the 60-Gln-|-Lys-61 bond and inhibits neurotransmitter release. Post-translationally, (Microbial infection) Targeted and hydrolyzed by C.botulinum neurotoxin type X (BoNT/X) which probably hydrolyzes the 68-Arg-|-Ala-69 bond and inhibits neurotransmitter release. It remains unknown whether BoNT/X is ever produced, or what organisms it targets. As to expression, nervous system, skeletal muscle and adipose tissue.

The protein localises to the cytoplasmic vesicle. Its subcellular location is the secretory vesicle. The protein resides in the synaptic vesicle membrane. It localises to the synapse. It is found in the synaptosome. The protein localises to the cytoplasmic vesicle membrane. Its subcellular location is the mitochondrion outer membrane. Involved in the targeting and/or fusion of transport vesicles to their target membrane. This is Vesicle-associated membrane protein 1 (VAMP1) from Homo sapiens (Human).